We begin with the raw amino-acid sequence, 502 residues long: Beta-glucosidase 7 (502 aa).

Residues 1–22 (MKPFSQFFVFVVTVSATSYIDA) form the signal peptide. Residues Gln-42, His-140, and 185 to 186 (NE) contribute to the a beta-D-glucoside site. The active-site Proton donor is Glu-186. Residue Asn-208 is glycosylated (N-linked (GlcNAc...) asparagine). Tyr-325 is a binding site for a beta-D-glucoside. Asn-359 carries an N-linked (GlcNAc...) asparagine glycan. Glu-392 is an a beta-D-glucoside binding site. Catalysis depends on Glu-392, which acts as the Nucleophile. An N-linked (GlcNAc...) asparagine glycan is attached at Asn-425. Trp-435 and Tyr-451 together coordinate a beta-D-glucoside. 2 N-linked (GlcNAc...) asparagine glycosylation sites follow: Asn-457 and Asn-479.

The protein belongs to the glycosyl hydrolase 1 family.

The catalysed reaction is Hydrolysis of terminal, non-reducing beta-D-glucosyl residues with release of beta-D-glucose.. In Arabidopsis thaliana (Mouse-ear cress), this protein is Beta-glucosidase 7.